Consider the following 128-residue polypeptide: Histone H2A type 1-H (128 aa).

The segment at 1–22 (MSGRGKQGGKARAKAKTRSSRA) is disordered. An N-acetylserine modification is found at serine 2. Serine 2 carries the phosphoserine; by RPS6KA5 modification. At arginine 4 the chain carries Citrulline; alternate. Arginine 4 is subject to Symmetric dimethylarginine; by PRMT5; alternate. N6-(2-hydroxyisobutyryl)lysine is present on lysine 6. Over residues 7-19 (QGGKARAKAKTRS) the composition is skewed to basic residues. The residue at position 10 (lysine 10) is an N6-(2-hydroxyisobutyryl)lysine; alternate. N6-(beta-hydroxybutyryl)lysine; alternate occurs at positions 10 and 14. At lysine 10 the chain carries N6-lactoyllysine; alternate. N6-succinyllysine; alternate is present on lysine 10. Lysine 14 participates in a covalent cross-link: Glycyl lysine isopeptide (Lys-Gly) (interchain with G-Cter in ubiquitin); alternate. Lysine 16 participates in a covalent cross-link: Glycyl lysine isopeptide (Lys-Gly) (interchain with G-Cter in ubiquitin). Lysine 37 bears the N6-(2-hydroxyisobutyryl)lysine; alternate mark. Lysine 37 is subject to N6-(beta-hydroxybutyryl)lysine; alternate. Lysine 37 carries the post-translational modification N6-crotonyllysine; alternate. N6-(2-hydroxyisobutyryl)lysine occurs at positions 75 and 76. An N6-(2-hydroxyisobutyryl)lysine; alternate modification is found at lysine 96. Lysine 96 is subject to N6-(beta-hydroxybutyryl)lysine; alternate. Lysine 96 bears the N6-succinyllysine; alternate mark. Lysine 96 carries the post-translational modification N6-glutaryllysine; alternate. Lysine 100 carries the post-translational modification N6-glutaryllysine. At glutamine 105 the chain carries N5-methylglutamine. Lysine 119 carries the post-translational modification N6-(2-hydroxyisobutyryl)lysine; alternate. Lysine 119 is modified (N6-(beta-hydroxybutyryl)lysine; alternate). Lysine 119 and lysine 120 each carry N6-crotonyllysine; alternate. Lysine 119 and lysine 120 each carry N6-glutaryllysine; alternate. Lysine 120 is covalently cross-linked (Glycyl lysine isopeptide (Lys-Gly) (interchain with G-Cter in ubiquitin); alternate). Threonine 121 bears the Phosphothreonine; by DCAF1 mark. The residue at position 126 (lysine 126) is an N6-crotonyllysine; alternate. Residue lysine 126 is modified to N6-glutaryllysine; alternate.

It belongs to the histone H2A family. The nucleosome is a histone octamer containing two molecules each of H2A, H2B, H3 and H4 assembled in one H3-H4 heterotetramer and two H2A-H2B heterodimers. The octamer wraps approximately 147 bp of DNA. In terms of processing, deiminated on Arg-4 in granulocytes upon calcium entry. Monoubiquitination of Lys-120 (H2AK119Ub) by RING1, TRIM37 and RNF2/RING2 complex gives a specific tag for epigenetic transcriptional repression and participates in X chromosome inactivation of female mammals. It is involved in the initiation of both imprinted and random X inactivation. Ubiquitinated H2A is enriched in inactive X chromosome chromatin. Ubiquitination of H2A functions downstream of methylation of 'Lys-27' of histone H3 (H3K27me). H2AK119Ub by RNF2/RING2 can also be induced by ultraviolet and may be involved in DNA repair. Monoubiquitination of Lys-120 (H2AK119Ub) by TRIM37 may promote transformation of cells in a number of breast cancers. Following DNA double-strand breaks (DSBs), it is ubiquitinated through 'Lys-63' linkage of ubiquitin moieties by the E2 ligase UBE2N and the E3 ligases RNF8 and RNF168, leading to the recruitment of repair proteins to sites of DNA damage. Ubiquitination at Lys-14 and Lys-16 (H2AK13Ub and H2AK15Ub, respectively) in response to DNA damage is initiated by RNF168 that mediates monoubiquitination at these 2 sites, and 'Lys-63'-linked ubiquitin are then conjugated to monoubiquitin; RNF8 is able to extend 'Lys-63'-linked ubiquitin chains in vitro. Deubiquitinated by USP51 at Lys-14 and Lys-16 (H2AK13Ub and H2AK15Ub, respectively) after damaged DNA is repaired. H2AK119Ub and ionizing radiation-induced 'Lys-63'-linked ubiquitination (H2AK13Ub and H2AK15Ub) are distinct events. Post-translationally, phosphorylation on Ser-2 (H2AS1ph) is enhanced during mitosis. Phosphorylation on Ser-2 by RPS6KA5/MSK1 directly represses transcription. Acetylation of H3 inhibits Ser-2 phosphorylation by RPS6KA5/MSK1. Phosphorylation at Thr-121 (H2AT120ph) by DCAF1 is present in the regulatory region of many tumor suppresor genes and down-regulates their transcription. In terms of processing, glutamine methylation at Gln-105 (H2AQ104me) by FBL is specifically dedicated to polymerase I. It is present at 35S ribosomal DNA locus and impairs binding of the FACT complex. Symmetric dimethylation on Arg-4 by the PRDM1/PRMT5 complex may play a crucial role in the germ-cell lineage. Post-translationally, crotonylation (Kcr) is specifically present in male germ cells and marks testis-specific genes in post-meiotic cells, including X-linked genes that escape sex chromosome inactivation in haploid cells. Crotonylation marks active promoters and enhancers and confers resistance to transcriptional repressors. It is also associated with post-meiotically activated genes on autosomes. In terms of processing, lactylated in macrophages by EP300/P300 by using lactoyl-CoA directly derived from endogenous or exogenous lactate, leading to stimulates gene transcription.

It is found in the nucleus. The protein localises to the chromosome. Core component of nucleosome. Nucleosomes wrap and compact DNA into chromatin, limiting DNA accessibility to the cellular machineries which require DNA as a template. Histones thereby play a central role in transcription regulation, DNA repair, DNA replication and chromosomal stability. DNA accessibility is regulated via a complex set of post-translational modifications of histones, also called histone code, and nucleosome remodeling. The polypeptide is Histone H2A type 1-H (Homo sapiens (Human)).